Reading from the N-terminus, the 67-residue chain is MGLVWSLISNSIQTIIADFAISVIDAALFFLMLLALAVVTVFLFWLIVAIGRSLVARCSRGARYRPV.

The N-myristoyl glycine; by host moiety is linked to residue Gly2. The interval 2 to 15 (GLVWSLISNSIQTI) is endoplasmic reticulum retention signal. Topologically, residues 2–27 (GLVWSLISNSIQTIIADFAISVIDAA) are virion surface. A helical transmembrane segment spans residues 28–48 (LFFLMLLALAVVTVFLFWLIV). Residues 49–67 (AIGRSLVARCSRGARYRPV) are Intravirion-facing.

It belongs to the arteriviridae E protein family. Homomultimer. Associates with itself into higher-order structures, including dimers, trimers and tetramers. Associates with the GP2b-GP3-GP4 complex. Post-translationally, myristoylated. In terms of processing, not glycosylated.

It is found in the virion membrane. It localises to the host endoplasmic reticulum membrane. Its subcellular location is the host Golgi apparatus membrane. The protein localises to the secreted. Its function is as follows. Minor envelope protein. May function as a viroporin in the virion envelope that facilitates uncoating of the virus in order to release the genomic RNA into the cytoplasm for subsequent replication. The sequence is that of Envelope small membrane protein (GP2a) from Equidae (horses).